The chain runs to 621 residues: Chaperone protein dnaK (621 aa).

The segment at 597-621 (VYSSTQQDNSKTEDGSVIDTNSKEA) is disordered.

This sequence belongs to the heat shock protein 70 family.

The protein resides in the plastid. Its subcellular location is the chloroplast. Acts as a chaperone. The polypeptide is Chaperone protein dnaK (Gracilaria tenuistipitata var. liui (Red alga)).